The sequence spans 235 residues: Small ribosomal subunit protein uS3 (235 aa).

Positions 39–107 constitute a KH type-2 domain; the sequence is VRQFLNKELA…PAQINIAEVK (69 aa). Positions 215–226 are enriched in low complexity; sequence AQQPEQQPATPK. The interval 215 to 235 is disordered; sequence AQQPEQQPATPKKAPRGKGRK.

This sequence belongs to the universal ribosomal protein uS3 family. Part of the 30S ribosomal subunit. Forms a tight complex with proteins S10 and S14.

In terms of biological role, binds the lower part of the 30S subunit head. Binds mRNA in the 70S ribosome, positioning it for translation. This Histophilus somni (strain 129Pt) (Haemophilus somnus) protein is Small ribosomal subunit protein uS3.